The sequence spans 500 residues: Proline/betaine transporter (500 aa).

At 1-37 (MLKRKKIKPITLGDVTIIDDGKLRKAITAASLGNAME) the chain is on the cytoplasmic side. Residues 38-58 (WFDFGVYGFVAYALGKVFFPG) traverse the membrane as a helical segment. The Periplasmic portion of the chain corresponds to 59-65 (ADPSVQM). A helical transmembrane segment spans residues 66 to 86 (IAALATFSVPFLIRPLGGLFF). Over 87-97 (GMLGDKYGRQK) the chain is Cytoplasmic. The helical transmembrane segment at 98–118 (ILAITIVIMSISTFCIGLIPS) threads the bilayer. The Periplasmic segment spans residues 119-121 (YAT). The helical transmembrane segment at 122 to 142 (IGIWAPILLLLCKMAQGFSVG) threads the bilayer. Topologically, residues 143–169 (GEYTGASIFVAEYSPDRKRGFMGSWLD) are cytoplasmic. Residues 170–190 (FGSIAGFVLGAGVVVLISTIV) form a helical membrane-spanning segment. Residues 191–194 (GEEN) are Periplasmic-facing. Residues 195 to 215 (FLEWGWRIPFFIALPLGIIGL) traverse the membrane as a helical segment. Topologically, residues 216 to 260 (YLRHALEETPAFQQHVDKLEQGDREGLQDGPKVSFKEIATKHWRS) are cytoplasmic. A helical transmembrane segment spans residues 261–281 (LLSCIGLVIATNVTYYMLLTY). At 282-297 (MPSYLSHNLHYSEDHG) the chain is on the periplasmic side. Residues 298–318 (VLIIIAIMIGMLFVQPVMGLL) form a helical membrane-spanning segment. The Cytoplasmic portion of the chain corresponds to 319–325 (SDRFGRR). Residues 326–346 (PFVIMGSIALFALAIPAFILI) form a helical membrane-spanning segment. Topologically, residues 347–350 (NSNV) are periplasmic. The helical transmembrane segment at 351–371 (IGLIFAGLLMLAVILNCFTGV) threads the bilayer. The Cytoplasmic segment spans residues 372-390 (MASTLPAMFPTHIRYSALA). Residues 391 to 411 (AAFNISVLIAGLTPTLAAWLV) traverse the membrane as a helical segment. At 412–416 (ESSQD) the chain is on the periplasmic side. A helical membrane pass occupies residues 417–437 (LMMPAYYLMVIAVIGLITGIS). The Cytoplasmic segment spans residues 438–500 (MKETANRPLK…LVQQHPRIDE (63 aa)). Residues 453–498 (ASDIQEAKEILGEHYDNIEQKIDDIDQEIAELQVKRSRLVQQHPRI) adopt a coiled-coil conformation.

This sequence belongs to the major facilitator superfamily. Metabolite:H+ Symporter (MHS) family (TC 2.A.1.6) family.

Its subcellular location is the cell inner membrane. Its function is as follows. Proton symporter that senses osmotic shifts and responds by importing osmolytes such as proline, glycine betaine, stachydrine, pipecolic acid, ectoine and taurine. It is both an osmosensor and an osmoregulator which is available to participate early in the bacterial osmoregulatory response. The sequence is that of Proline/betaine transporter (proP) from Salmonella typhimurium (strain LT2 / SGSC1412 / ATCC 700720).